The following is a 713-amino-acid chain: Acetyl-coenzyme A synthetase 1 (713 aa).

The disordered stretch occupies residues 1–39 (MSPSAVQSSKLEEQSSEIDKLKAKMSQSAATAQQKKEHE). Residues 10-22 (KLEEQSSEIDKLK) are compositionally biased toward basic and acidic residues. CoA is bound by residues 248–251 (RGGK) and T367. ATP contacts are provided by residues 443 to 445 (GEP), 467 to 472 (DTYWQT), D559, and R574. The FACS motif lies at 552 to 600 (PGYYFTGDGAAKDKDGYIWILGRVDDVVNVSGHRLSTAEIEAAIIEDPI). S582 provides a ligand contact to CoA. R585 contacts ATP. A CoA-binding site is contributed by R650. The short motif at 711-713 (VKL) is the Microbody targeting signal element.

This sequence belongs to the ATP-dependent AMP-binding enzyme family.

The protein resides in the microsome. It localises to the cytoplasm. It is found in the mitochondrion. The protein localises to the nucleus. The catalysed reaction is acetate + ATP + CoA = acetyl-CoA + AMP + diphosphate. Its function is as follows. Catalyzes the production of acetyl-CoA. Provides the acetyl-CoA source for histone acetylation in the nucleus. 'Aerobic' isozyme of acetyl-coenzyme A synthetase, which supports growth on nonfermentable carbon sources such as glycerol and ethanol. May be required for assimilation of ethanol and acetate. In Saccharomyces cerevisiae (strain ATCC 204508 / S288c) (Baker's yeast), this protein is Acetyl-coenzyme A synthetase 1 (ACS1).